The sequence spans 298 residues: Aspartate carbamoyltransferase catalytic subunit (298 aa).

The carbamoyl phosphate site is built by Arg-53 and Thr-54. Lys-81 contributes to the L-aspartate binding site. Positions 103, 132, and 135 each coordinate carbamoyl phosphate. L-aspartate-binding residues include Arg-166 and Arg-218. 2 residues coordinate carbamoyl phosphate: Gly-259 and Pro-260.

The protein belongs to the aspartate/ornithine carbamoyltransferase superfamily. ATCase family. Heterododecamer (2C3:3R2) of six catalytic PyrB chains organized as two trimers (C3), and six regulatory PyrI chains organized as three dimers (R2).

It catalyses the reaction carbamoyl phosphate + L-aspartate = N-carbamoyl-L-aspartate + phosphate + H(+). It participates in pyrimidine metabolism; UMP biosynthesis via de novo pathway; (S)-dihydroorotate from bicarbonate: step 2/3. Functionally, catalyzes the condensation of carbamoyl phosphate and aspartate to form carbamoyl aspartate and inorganic phosphate, the committed step in the de novo pyrimidine nucleotide biosynthesis pathway. The protein is Aspartate carbamoyltransferase catalytic subunit of Anaplasma marginale (strain St. Maries).